A 268-amino-acid chain; its full sequence is uncharacterized protein (268 aa).

The stretch at 132–159 forms a coiled coil; it reads DELDEKIIEFDTKMNEILEELLEDVEVE.

This is an uncharacterized protein from Methanocaldococcus jannaschii (strain ATCC 43067 / DSM 2661 / JAL-1 / JCM 10045 / NBRC 100440) (Methanococcus jannaschii).